We begin with the raw amino-acid sequence, 639 residues long: Protein sly1 (639 aa).

This sequence belongs to the STXBP/unc-18/SEC1 family.

It localises to the cytoplasm. This chain is Protein sly1 (sly1), found in Schizosaccharomyces pombe (strain 972 / ATCC 24843) (Fission yeast).